The following is an 85-amino-acid chain: MAAERTQNLQDTFLNHVRKSKTPLTIFLVNGVKLQGVVTWFDNFCVLLRRDGHSQLVYKHAISTIMPGHPVQLFDPTDEVASEKA.

Residues 11 to 71 (DTFLNHVRKS…ISTIMPGHPV (61 aa)) form the Sm domain.

It belongs to the Hfq family. Homohexamer.

In terms of biological role, RNA chaperone that binds small regulatory RNA (sRNAs) and mRNAs to facilitate mRNA translational regulation in response to envelope stress, environmental stress and changes in metabolite concentrations. Also binds with high specificity to tRNAs. Seems to be involved in the regulation of NifA. The chain is RNA-binding protein Hfq from Azorhizobium caulinodans (strain ATCC 43989 / DSM 5975 / JCM 20966 / LMG 6465 / NBRC 14845 / NCIMB 13405 / ORS 571).